The following is a 37-amino-acid chain: Large ribosomal subunit protein bL36 (37 aa).

Belongs to the bacterial ribosomal protein bL36 family.

This Polaromonas naphthalenivorans (strain CJ2) protein is Large ribosomal subunit protein bL36.